Reading from the N-terminus, the 751-residue chain is Photosystem I P700 chlorophyll a apoprotein A1 (751 aa).

8 helical membrane-spanning segments follow: residues Val-73–Ala-96, Leu-159–His-182, Leu-198–Leu-222, Val-294–Tyr-312, Trp-349–Tyr-372, Leu-388–Val-414, Ala-436–His-458, and Phe-533–Leu-551. Cys-575 and Cys-584 together coordinate [4Fe-4S] cluster. The next 2 helical transmembrane spans lie at His-591–Trp-612 and Leu-665–Phe-687. His-676 contributes to the chlorophyll a' binding site. Chlorophyll a contacts are provided by Met-684 and Tyr-692. Phylloquinone is bound at residue Trp-693. The chain crosses the membrane as a helical span at residues Ala-725 to Ala-745.

This sequence belongs to the PsaA/PsaB family. The PsaA/B heterodimer binds the P700 chlorophyll special pair and subsequent electron acceptors. PSI consists of a core antenna complex that captures photons, and an electron transfer chain that converts photonic excitation into a charge separation. The eukaryotic PSI reaction center is composed of at least 11 subunits. It depends on P700 is a chlorophyll a/chlorophyll a' dimer, A0 is one or more chlorophyll a, A1 is one or both phylloquinones and FX is a shared 4Fe-4S iron-sulfur center. as a cofactor.

The protein localises to the plastid. Its subcellular location is the chloroplast thylakoid membrane. The catalysed reaction is reduced [plastocyanin] + hnu + oxidized [2Fe-2S]-[ferredoxin] = oxidized [plastocyanin] + reduced [2Fe-2S]-[ferredoxin]. PsaA and PsaB bind P700, the primary electron donor of photosystem I (PSI), as well as the electron acceptors A0, A1 and FX. PSI is a plastocyanin/cytochrome c6-ferredoxin oxidoreductase, converting photonic excitation into a charge separation, which transfers an electron from the donor P700 chlorophyll pair to the spectroscopically characterized acceptors A0, A1, FX, FA and FB in turn. Oxidized P700 is reduced on the lumenal side of the thylakoid membrane by plastocyanin or cytochrome c6. The protein is Photosystem I P700 chlorophyll a apoprotein A1 of Euglena gracilis.